The chain runs to 182 residues: Homeobox protein pnx (182 aa).

The segment at 1–34 (MHEETSNSTLQGKTSFSIADILDPAKFNGTRETR) is important for interaction with tle3a. A disordered region spans residues 24–63 (PAKFNGTRETREISNNRESPKTTSPTQDPSAPNIANASAA). A compositionally biased stretch (basic and acidic residues) spans 29 to 43 (GTRETREISNNRESP). Positions 52–63 (PSAPNIANASAA) are enriched in low complexity. The homeobox DNA-binding region spans 67-126 (SKRIRTAFTLDQLRILERSFQSSHYLSVFERHCIASALGLSETQVKIWFQNRRTKWKKEL).

It belongs to the NK-1 homeobox family. In terms of assembly, interacts with tle3a.

It localises to the nucleus. Its function is as follows. Transcriptional repressor. Activity as a repressor is enhanced by binding to the corepressor tle3a. This chain is Homeobox protein pnx, found in Danio rerio (Zebrafish).